We begin with the raw amino-acid sequence, 354 residues long: NADH-quinone oxidoreductase subunit H (354 aa).

Helical transmembrane passes span 25 to 45, 91 to 111, 126 to 146, 170 to 190, 205 to 225, 257 to 277, 290 to 310, and 330 to 350; these read LVRI…LILW, WVYL…WAVI, LLYA…AGWA, MGFA…SDIV, FLSW…VSGI, LFFL…SILF, FIPG…VFIW, and VFLP…MSPL.

It belongs to the complex I subunit 1 family. In terms of assembly, NDH-1 is composed of 14 different subunits. Subunits NuoA, H, J, K, L, M, N constitute the membrane sector of the complex.

It is found in the cell inner membrane. The enzyme catalyses a quinone + NADH + 5 H(+)(in) = a quinol + NAD(+) + 4 H(+)(out). Functionally, NDH-1 shuttles electrons from NADH, via FMN and iron-sulfur (Fe-S) centers, to quinones in the respiratory chain. The immediate electron acceptor for the enzyme in this species is believed to be ubiquinone. Couples the redox reaction to proton translocation (for every two electrons transferred, four hydrogen ions are translocated across the cytoplasmic membrane), and thus conserves the redox energy in a proton gradient. This subunit may bind ubiquinone. The polypeptide is NADH-quinone oxidoreductase subunit H (Paraburkholderia phymatum (strain DSM 17167 / CIP 108236 / LMG 21445 / STM815) (Burkholderia phymatum)).